A 1393-amino-acid chain; its full sequence is RNA polymerase II-associated protein 1 (1393 aa).

3 disordered regions span residues 34–53 (KKGNRGGGDANSDRPPLQDH), 61–94 (NLPDLPPALVPSPPKRARPSPGHCLPEDEDPEER), and 266–295 (SHTQEQTGETASEEQRPGGPSANVTKEEPL). Over residues 64–74 (DLPPALVPSPP) the composition is skewed to pro residues. Ser-72 carries the post-translational modification Phosphoserine. Thr-321 is subject to Phosphothreonine. A disordered region spans residues 496 to 531 (PSQEDKEDEDEDEECPAGKAKRKSPEEESRPPPDLA). Residues 500–510 (DKEDEDEDEEC) show a composition bias toward acidic residues. The segment covering 518 to 531 (KSPEEESRPPPDLA) has biased composition (basic and acidic residues). Residue Ser-1121 is modified to Phosphoserine.

Belongs to the RPAP1 family. Part of an RNA polymerase II complex that contains POLR2A, POLR2B, POLR2C, POLR2D, POLR2E, POLR2F, POLR2G, POLR2H, POLR2I, POLR2J, POLR2K, POLR2L, RPAP1, FCP1 plus the general transcription factors TFIIB and TFIIF.

The protein localises to the nucleus. In terms of biological role, forms an interface between the RNA polymerase II enzyme and chaperone/scaffolding protein, suggesting that it is required to connect RNA polymerase II to regulators of protein complex formation. Required for interaction of the RNA polymerase II complex with acetylated histone H3. This is RNA polymerase II-associated protein 1 (RPAP1) from Homo sapiens (Human).